A 123-amino-acid polypeptide reads, in one-letter code: Protein lgg-1 (123 aa).

A lipid anchor (Phosphatidylethanolamine amidated glycine) is attached at Gly-116. Positions 117 to 123 (GEVEKKE) are cleaved as a propeptide — removed in mature form.

It belongs to the ATG8 family. In terms of assembly, interacts with sepa-1 (via the LIR motifs); the interaction is direct. Interacts with allo-1 (via the LIR motif). Interacts with sqst-1 (via the LIR motifs); the interaction is direct. Both lipidated and unlipidated forms interact with epg-7 (via the LIR motif); the interaction is direct. Interacts with epg-2 (via the LIR motifs); the interaction is direct. Interacts with atg-13; the interaction is direct. Interacts with unc-51 (via the LIR motif); the interaction is direct. Interacts with atg-7; the interaction is direct. Interacts with atg-3. The interaction with atg-7 and atg-3 may be required for the lipidation of lgg-1. In terms of processing, cleaved by atg-4.1 and/or atg-4.2, after Gly-116 to form a thioester bond with 'Cys-523' of atg-7 (E1-like activating enzyme) before being transferred to 'Cys-255' of atg-3 (E2 conjugating enzyme), in order to be amidated with phosphatidylethanolamine. This lipid modification anchors lgg-1 to membranes and can be reversed by atg-4.2, releasing soluble lgg-1. C-terminal cleavage is essential for autophagosome initiation and biogenesis. Lipidation is not essential for autophagy or development but the lipidated form is involved in cargo recognition and autophagosome biogenesis. Lipidation regulates lgg-2-positive autophagosome formation. In terms of tissue distribution, expressed in PLML touch receptor neuron and in the ventral nerve cord. Expressed in AIY interneurons.

Its subcellular location is the preautophagosomal structure. It is found in the cytoplasmic vesicle. It localises to the autophagosome. The protein localises to the autophagosome membrane. The protein resides in the lysosome lumen. Its subcellular location is the mitochondrion. It is found in the cytoplasm. It localises to the phagosome membrane. The protein localises to the cell membrane. The protein resides in the cell projection. Its subcellular location is the dendrite. It is found in the perikaryon. Ubiquitin-like modifier involved in the formation of autophagosomal vacuoles (autophagosomes). When lipidated mediates tethering between adjacent membranes and stimulates membrane fusion during autophagy. Recruits lipidated-lgg-2 to maturing autophagosomes. Acts in the aggrephagy pathway, which is the macroautophagic degradation of ubiquitinated protein aggregates, and preferentially interacts with autophagy proteins and substrates containing LIR motifs to mediate autophagosome formation and protein aggregate degradation. In particular, binds to components of the unc-51-atg-13 complex to regulate autophagosome formation and cargo sequestration. Required for the degradation of specific sepa-1- and sqst-1-containing protein aggregates during embryogenesis. Involved in allophagy, which is an autophagic process in which paternal mitochondria and organelles are degraded during fertilization, and moreover is required for the formation of lgg-2-positive allophagic autophagosomes in embryos. Involved in the clearance of apoptotic cells by promoting the delivery of engulfed apoptotic cells to the lysosome. Plays a role in the distribution and clearance of germ cell specific P-granules from somatic cells. Also plays a role in the autophagy-mediated degradation of ribosomal RNA and ribosomal proteins in lysosomes. Involved in xenophagy, the autophagy-mediated degradation of pathogens and pathogen products, such as toxins. Required for normal survival when exposed to pathogenic bacteria S.typhimurium probably by promoting autophagic degradation of intracellular S.typhimurium. Also plays a role in membrane-pore repair. Plays a role in mitophagy. Essential for dauer development and longevity, including longevity in response to moderate, short-term heat shock, also known as a hormetic heat shock. In Caenorhabditis elegans, this protein is Protein lgg-1.